Consider the following 200-residue polypeptide: Coiled-coil domain-containing protein 28B (200 aa).

Methionine 1 bears the N-acetylmethionine mark. Positions 1–10 (MEDKKKKRSP) are enriched in basic residues. Residues 1 to 49 (MEDKKKKRSPKPCLTQPAQAPGTLRRVPVPTSHSGSLALGLPHLPSPKQ) are disordered. Residues serine 46 and serine 115 each carry the phosphoserine modification. A compositionally biased stretch (acidic residues) spans 140–152 (GEEEDEEEEEDGV). Positions 140 to 165 (GEEEDEEEEEDGVTEGLPEEQKKTMA) are disordered. Positions 158–189 (EEQKKTMADRNLDQLLSNLEDLSNSIQKLHLA) form a coiled coil.

As to quaternary structure, interacts with BBS1, BBS2, BBS4, BBS5, BBS6, BBS7 and TTC8/BBS8. Interacts with MAPKAP1/SIN1 isoform 1 and RICTOR. In terms of tissue distribution, expressed in the retina, pericardium and limb epithelium.

It is found in the cytoplasm. Its subcellular location is the cytoskeleton. It localises to the microtubule organizing center. The protein resides in the centrosome. Involved in ciliogenesis. Regulates cilia length through its interaction with MAPKAP1/SIN1 but independently of mTORC2 complex. Modulates mTORC2 complex assembly and function, possibly enhances AKT1 phosphorylation. Does not seem to modulate assembly and function of mTORC1 complex. This Mus musculus (Mouse) protein is Coiled-coil domain-containing protein 28B (Ccdc28b).